The primary structure comprises 378 residues: Polar flagellin B/D (378 aa).

Coiled-coil stretches lie at residues 103 to 128 (SNSK…RIAE) and 311 to 340 (AFQN…IKDT).

This sequence belongs to the bacterial flagellin family. As to quaternary structure, heteromer of multiple flagellin subunits including FlaA, FlaB/D, FlaC, FlaE and FlaF.

The protein localises to the secreted. It is found in the bacterial flagellum. Flagellin is the subunit protein which polymerizes to form the filaments of bacterial flagella. FlaB/D is not essential for polar flagellar synthesis and swimming motility. Homomer of FlaB/D is not able to form a functional filament. The protein is Polar flagellin B/D (flaB) of Vibrio parahaemolyticus serotype O3:K6 (strain RIMD 2210633).